Here is a 287-residue protein sequence, read N- to C-terminus: Lipoyl synthase (287 aa).

[4Fe-4S] cluster is bound by residues cysteine 34, cysteine 39, cysteine 45, cysteine 60, cysteine 64, cysteine 67, and serine 273. Positions 46-262 (WNKRHATVMI…KYIAYSKGFL (217 aa)) constitute a Radical SAM core domain.

It belongs to the radical SAM superfamily. Lipoyl synthase family. The cofactor is [4Fe-4S] cluster.

The protein localises to the cytoplasm. The enzyme catalyses [[Fe-S] cluster scaffold protein carrying a second [4Fe-4S](2+) cluster] + N(6)-octanoyl-L-lysyl-[protein] + 2 oxidized [2Fe-2S]-[ferredoxin] + 2 S-adenosyl-L-methionine + 4 H(+) = [[Fe-S] cluster scaffold protein] + N(6)-[(R)-dihydrolipoyl]-L-lysyl-[protein] + 4 Fe(3+) + 2 hydrogen sulfide + 2 5'-deoxyadenosine + 2 L-methionine + 2 reduced [2Fe-2S]-[ferredoxin]. It participates in protein modification; protein lipoylation via endogenous pathway; protein N(6)-(lipoyl)lysine from octanoyl-[acyl-carrier-protein]: step 2/2. Its function is as follows. Catalyzes the radical-mediated insertion of two sulfur atoms into the C-6 and C-8 positions of the octanoyl moiety bound to the lipoyl domains of lipoate-dependent enzymes, thereby converting the octanoylated domains into lipoylated derivatives. This is Lipoyl synthase from Wolbachia sp. subsp. Drosophila simulans (strain wRi).